The following is a 255-amino-acid chain: 5'-nucleotidase SurE (255 aa).

A divalent metal cation-binding residues include D8, D9, S39, and N95.

Belongs to the SurE nucleotidase family. Requires a divalent metal cation as cofactor.

It localises to the cytoplasm. It carries out the reaction a ribonucleoside 5'-phosphate + H2O = a ribonucleoside + phosphate. In terms of biological role, nucleotidase that shows phosphatase activity on nucleoside 5'-monophosphates. This Thermosipho melanesiensis (strain DSM 12029 / CIP 104789 / BI429) protein is 5'-nucleotidase SurE.